Reading from the N-terminus, the 1028-residue chain is Beta-galactosidase (1028 aa).

N104 and D203 together coordinate substrate. Residue D203 coordinates Na(+). Residues E418, H420, and E463 each contribute to the Mg(2+) site. Substrate-binding positions include E463 and 539–542 (EYAH). Residue E463 is the Proton donor of the active site. E539 functions as the Nucleophile in the catalytic mechanism. Position 599 (N599) interacts with Mg(2+). Residues F603 and N606 each coordinate Na(+). Positions 606 and 1003 each coordinate substrate.

It belongs to the glycosyl hydrolase 2 family. As to quaternary structure, homotetramer. It depends on Mg(2+) as a cofactor. The cofactor is Na(+).

It carries out the reaction Hydrolysis of terminal non-reducing beta-D-galactose residues in beta-D-galactosides.. This is Beta-galactosidase from Enterobacter cloacae.